Here is a 329-residue protein sequence, read N- to C-terminus: Quinone oxidoreductase (329 aa).

Alanine 2 is modified (N-acetylalanine). Position 23 is an N6-acetyllysine (lysine 23). NADP(+) contacts are provided by residues tyrosine 53, serine 158–valine 161, glycine 181, histidine 200, asparagine 229, valine 246–arginine 249, and valine 269–leucine 271. At serine 248 the chain carries Phosphoserine.

It belongs to the zinc-containing alcohol dehydrogenase family. Quinone oxidoreductase subfamily. Homotetramer.

The protein localises to the cytoplasm. The enzyme catalyses 2 a quinone + NADPH + H(+) = 2 a 1,4-benzosemiquinone + NADP(+). Does not have alcohol dehydrogenase activity. Binds NADP and acts through a one-electron transfer process. Orthoquinones, such as 1,2-naphthoquinone or 9,10-phenanthrenequinone, are the best substrates (in vitro). May act in the detoxification of xenobiotics. Interacts with (AU)-rich elements (ARE) in the 3'-UTR of target mRNA species and enhances their stability. NADPH binding interferes with mRNA binding. The protein is Quinone oxidoreductase (CRYZ) of Sus scrofa (Pig).